Reading from the N-terminus, the 118-residue chain is Large ribosomal subunit protein uL24 (118 aa).

Residues M1 to V24 are disordered.

The protein belongs to the universal ribosomal protein uL24 family. As to quaternary structure, part of the 50S ribosomal subunit.

Its function is as follows. One of two assembly initiator proteins, it binds directly to the 5'-end of the 23S rRNA, where it nucleates assembly of the 50S subunit. In terms of biological role, located at the polypeptide exit tunnel on the outside of the subunit. In Halobacterium salinarum (strain ATCC 700922 / JCM 11081 / NRC-1) (Halobacterium halobium), this protein is Large ribosomal subunit protein uL24.